A 197-amino-acid polypeptide reads, in one-letter code: Holliday junction branch migration complex subunit RuvA (197 aa).

A domain I region spans residues 1 to 64; sequence MYEYIKGKYI…EDFIGVYGFL (64 aa). The tract at residues 65–144 is domain II; the sequence is TKDELSMFKL…DILEEDDEQI (80 aa). The segment at 145 to 149 is flexible linker; it reads INKVT. The segment at 149–197 is domain III; that stretch reads TDDKKVLEAVAALVTLGYSEKEANKVINSCDKNNSLEQIIKEALKYLMK.

Belongs to the RuvA family. In terms of assembly, homotetramer. Forms an RuvA(8)-RuvB(12)-Holliday junction (HJ) complex. HJ DNA is sandwiched between 2 RuvA tetramers; dsDNA enters through RuvA and exits via RuvB. An RuvB hexamer assembles on each DNA strand where it exits the tetramer. Each RuvB hexamer is contacted by two RuvA subunits (via domain III) on 2 adjacent RuvB subunits; this complex drives branch migration. In the full resolvosome a probable DNA-RuvA(4)-RuvB(12)-RuvC(2) complex forms which resolves the HJ.

It is found in the cytoplasm. Functionally, the RuvA-RuvB-RuvC complex processes Holliday junction (HJ) DNA during genetic recombination and DNA repair, while the RuvA-RuvB complex plays an important role in the rescue of blocked DNA replication forks via replication fork reversal (RFR). RuvA specifically binds to HJ cruciform DNA, conferring on it an open structure. The RuvB hexamer acts as an ATP-dependent pump, pulling dsDNA into and through the RuvAB complex. HJ branch migration allows RuvC to scan DNA until it finds its consensus sequence, where it cleaves and resolves the cruciform DNA. The sequence is that of Holliday junction branch migration complex subunit RuvA from Clostridium botulinum (strain Kyoto / Type A2).